The following is a 1060-amino-acid chain: Protein FAM184B (1060 aa).

A compositionally biased stretch (polar residues) spans 1-17 (MASALNSKINPPGTCQG). The tract at residues 1–24 (MASALNSKINPPGTCQGSKADGGA) is disordered. A coiled-coil region spans residues 51–159 (ALNTRQDEAE…EMLELKADYE (109 aa)). The disordered stretch occupies residues 165–191 (LTSHEATPQGRLPQESPETKSEPGQGP). Coiled-coil stretches lie at residues 192–333 (EMQE…DRMM) and 402–502 (MKQQ…RLEE). Disordered stretches follow at residues 532 to 566 (QDPC…EERT), 681 to 700 (TEER…HQTH), and 762 to 803 (GRQQ…GSGE). Composition is skewed to basic and acidic residues over residues 536–554 (LKLD…KLAA), 681–690 (TEERLKKESS), and 773–785 (DSKD…EERG). Residues 584–769 (LKEKTSKIQR…ALGRQQASSQ (186 aa)) adopt a coiled-coil conformation. A coiled-coil region spans residues 806 to 934 (GLWEENAQLQ…KQLTEERRFH (129 aa)). Composition is skewed to polar residues over residues 994–1009 (SRIN…SLDP) and 1018–1030 (KPNQ…TATR). The tract at residues 994–1050 (SRINAPPITTSPSLDPSPSCGRTYKPNQSTDAKTATRTPDGETAQAKEVQQKQGSPH) is disordered.

This sequence belongs to the FAM184 family.

The sequence is that of Protein FAM184B (FAM184B) from Homo sapiens (Human).